A 243-amino-acid chain; its full sequence is MDELALSFSLTCLLPENRASLSPSQPLSFQCLKAPATLTWEDEKQQRWGQPHGPVSSPLLGDHRCLVPFRDLNPSSEVNTANLLESPSSLLLTSCYICSYFSFYILGEKRCHSLKRLRYSVCCKVCPNFCACGKENVSGTGQVCTGVHVGAKEQEEPGGTQALRSCGIYCLEERTDKASHEECRERSTLGRPQCTGLTPSLAGESPCPRLLPGSPTVRHLIASSCPGLSDPLPLPPGTLPLGS.

Positions 1–19 are cleaved as a signal peptide; it reads MDELALSFSLTCLLPENRA. An N-linked (GlcNAc...) asparagine glycan is attached at Asn-136.

It localises to the secreted. This is an uncharacterized protein from Homo sapiens (Human).